Reading from the N-terminus, the 91-residue chain is Small ribosomal subunit protein uS19 (91 aa).

This sequence belongs to the universal ribosomal protein uS19 family.

Functionally, protein S19 forms a complex with S13 that binds strongly to the 16S ribosomal RNA. This chain is Small ribosomal subunit protein uS19, found in Fusobacterium nucleatum subsp. nucleatum (strain ATCC 25586 / DSM 15643 / BCRC 10681 / CIP 101130 / JCM 8532 / KCTC 2640 / LMG 13131 / VPI 4355).